We begin with the raw amino-acid sequence, 389 residues long: Probable family 17 glucosidase SCW10 (389 aa).

Residues 1–18 (MRFSNFLTVSALLTGALG) form the signal peptide. A propeptide spanning residues 19–29 (APAVRHKHEKR) is cleaved from the precursor. Residues 70–134 (ASQATTSTLE…SSASSSISAS (65 aa)) form a disordered region. Asn-279 carries N-linked (GlcNAc...) asparagine glycosylation. Glu-326 functions as the Nucleophile in the catalytic mechanism.

Belongs to the glycosyl hydrolase 17 family. Glycosylated.

The protein localises to the secreted. It is found in the cell wall. Its function is as follows. Glucanases possibly play a role in cell expansion during growth, in cell-cell fusion during mating, and in spore release during sporulation. The protein is Probable family 17 glucosidase SCW10 (SCW10) of Saccharomyces cerevisiae (strain ATCC 204508 / S288c) (Baker's yeast).